The following is a 54-amino-acid chain: Hemolytic toxin (54 aa).

The interval Ala-3–Ala-12 is plays an important role in the hemolytic activity. The tract at residues Gly-11 to Ser-30 is N-terminal region.

This sequence belongs to the actinoporin family. Sea anemone subfamily. Octamer or nonamer in membranes. Monomer in the soluble state.

The protein localises to the secreted. It localises to the nematocyst. It is found in the target cell membrane. Its function is as follows. Pore-forming protein that forms cations-selective hydrophilic pores of around 1 nm and causes cytolysis. Pore formation is a multi-step process that involves specific recognition of membrane sphingomyelin (but neither cholesterol nor phosphatidylcholine) using aromatic rich region and adjacent phosphocholine (POC) binding site, firm binding to the membrane (mainly driven by hydrophobic interactions) accompanied by the transfer of the N-terminal region to the lipid-water interface and finally pore formation after oligomerization of monomers. The protein is Hemolytic toxin of Heteractis magnifica (Magnificent sea anemone).